We begin with the raw amino-acid sequence, 64 residues long: Small ribosomal subunit protein bS21 (64 aa).

The disordered stretch occupies residues 26–64 (DGILSEARRRTRFERPPTRRKRKDAAKRRLAIKAARKAT). Residues 43–64 (TRRKRKDAAKRRLAIKAARKAT) are compositionally biased toward basic residues.

Belongs to the bacterial ribosomal protein bS21 family.

The chain is Small ribosomal subunit protein bS21 from Dehalococcoides mccartyi (strain ATCC BAA-2100 / JCM 16839 / KCTC 5957 / BAV1).